Reading from the N-terminus, the 174-residue chain is RNA pyrophosphohydrolase (174 aa).

A Nudix hydrolase domain is found at G6–K149. The short motif at G38–G59 is the Nudix box element.

Belongs to the Nudix hydrolase family. RppH subfamily. It depends on a divalent metal cation as a cofactor.

In terms of biological role, accelerates the degradation of transcripts by removing pyrophosphate from the 5'-end of triphosphorylated RNA, leading to a more labile monophosphorylated state that can stimulate subsequent ribonuclease cleavage. This is RNA pyrophosphohydrolase from Shewanella sp. (strain ANA-3).